Consider the following 365-residue polypeptide: Sulfate/thiosulfate import ATP-binding protein CysA (365 aa).

The 235-residue stretch at 3–237 (IEIANIKKSF…PATRFVLEFM (235 aa)) folds into the ABC transporter domain. 35-42 (GPSGSGKT) contacts ATP.

Belongs to the ABC transporter superfamily. Sulfate/tungstate importer (TC 3.A.1.6) family. In terms of assembly, the complex is composed of two ATP-binding proteins (CysA), two transmembrane proteins (CysT and CysW) and a solute-binding protein (CysP).

The protein resides in the cell inner membrane. It catalyses the reaction sulfate(out) + ATP + H2O = sulfate(in) + ADP + phosphate + H(+). It carries out the reaction thiosulfate(out) + ATP + H2O = thiosulfate(in) + ADP + phosphate + H(+). Functionally, part of the ABC transporter complex CysAWTP involved in sulfate/thiosulfate import. Responsible for energy coupling to the transport system. This is Sulfate/thiosulfate import ATP-binding protein CysA from Shigella flexneri.